A 282-amino-acid chain; its full sequence is DNA-directed RNA polymerase III subunit RPC5 (282 aa).

The tract at residues 1 to 70 (MSIDNKLFVT…TGEEEEDDPV (70 aa)) is disordered. 2 stretches are compositionally biased toward acidic residues: residues 10–35 (TEED…DMIA) and 60–70 (DTGEEEEDDPV). The residue at position 61 (threonine 61) is a Phosphothreonine.

As to quaternary structure, component of the RNA polymerase III (Pol III) complex consisting of 17 subunits. Interacts with RPC53/RPC4. RPC53/RPC4, RPC37/RPC5 and RPC11/RPC10 probably form a Pol III subcomplex.

The protein localises to the nucleus. Functionally, DNA-dependent RNA polymerase catalyzes the transcription of DNA into RNA using the four ribonucleoside triphosphates as substrates. Specific peripheric component of RNA polymerase III which synthesizes small RNAs, such as 5S rRNA and tRNAs. The RPC53/RPC4-RPC37/RPC5 subcomplex is required for terminator recognition and reinitiation. The chain is DNA-directed RNA polymerase III subunit RPC5 (RPC37) from Saccharomyces cerevisiae (strain ATCC 204508 / S288c) (Baker's yeast).